We begin with the raw amino-acid sequence, 130 residues long: D-ribose pyranase (130 aa).

His20 (proton donor) is an active-site residue. Substrate-binding positions include Asp28, His97, and Tyr119–Asn121.

The protein belongs to the RbsD / FucU family. RbsD subfamily. Homodecamer.

The protein localises to the cytoplasm. The enzyme catalyses beta-D-ribopyranose = beta-D-ribofuranose. It functions in the pathway carbohydrate metabolism; D-ribose degradation; D-ribose 5-phosphate from beta-D-ribopyranose: step 1/2. Catalyzes the interconversion of beta-pyran and beta-furan forms of D-ribose. The polypeptide is D-ribose pyranase (Thermoanaerobacter pseudethanolicus (strain ATCC 33223 / 39E) (Clostridium thermohydrosulfuricum)).